Consider the following 134-residue polypeptide: D-xylulose reductase (134 aa).

The segment at 31 to 115 is disordered; it reads PATTTXYKXQ…XXQXDKIGRY (85 aa). Residues 50 to 59 are compositionally biased toward basic and acidic residues; sequence QTHEGTHQDV.

It belongs to the zinc-containing alcohol dehydrogenase family.

The enzyme catalyses xylitol + NAD(+) = D-xylulose + NADH + H(+). Its activity is regulated as follows. Activated by calcium and inhibited by zinc. This Sus scrofa (Pig) protein is D-xylulose reductase.